The primary structure comprises 378 residues: S-(hydroxymethyl)glutathione dehydrogenase (378 aa).

Zn(2+)-binding residues include Cys-49, His-71, Cys-101, Cys-104, Cys-107, Cys-115, and Cys-178.

The protein belongs to the zinc-containing alcohol dehydrogenase family. Class-III subfamily. As to quaternary structure, homodimer. Requires Zn(2+) as cofactor.

Its subcellular location is the cytoplasm. The catalysed reaction is S-(hydroxymethyl)glutathione + NADP(+) = S-formylglutathione + NADPH + H(+). It catalyses the reaction S-(hydroxymethyl)glutathione + NAD(+) = S-formylglutathione + NADH + H(+). The enzyme catalyses a primary alcohol + NAD(+) = an aldehyde + NADH + H(+). It carries out the reaction a secondary alcohol + NAD(+) = a ketone + NADH + H(+). The catalysed reaction is S-nitrosoglutathione + NADH + H(+) = S-(hydroxysulfenamide)glutathione + NAD(+). Has high formaldehyde dehydrogenase activity in the presence of glutathione and catalyzes the oxidation of normal alcohols in a reaction that is not GSH-dependent. In addition, hemithiolacetals other than those formed from GSH, including omega-thiol fatty acids, also are substrates. Also acts as a S-nitroso-glutathione reductase by catalyzing the NADH-dependent reduction of S-nitrosoglutathione. The polypeptide is S-(hydroxymethyl)glutathione dehydrogenase (frmA) (Haemophilus influenzae (strain ATCC 51907 / DSM 11121 / KW20 / Rd)).